The primary structure comprises 170 residues: Putative pre-16S rRNA nuclease (170 aa).

A compositionally biased stretch (basic and acidic residues) spans 1 to 18; the sequence is MGTDDRLPDRPGADDPGR. A disordered region spans residues 1 to 22; it reads MGTDDRLPDRPGADDPGRGRRI.

Belongs to the YqgF nuclease family.

Its subcellular location is the cytoplasm. In terms of biological role, could be a nuclease involved in processing of the 5'-end of pre-16S rRNA. The chain is Putative pre-16S rRNA nuclease from Mycolicibacterium smegmatis (strain ATCC 700084 / mc(2)155) (Mycobacterium smegmatis).